Here is a 104-residue protein sequence, read N- to C-terminus: Large ribosomal subunit protein uL24 (104 aa).

Belongs to the universal ribosomal protein uL24 family. As to quaternary structure, part of the 50S ribosomal subunit. Post-translationally, a methylated and unmethylated form are thought to exist.

In terms of biological role, one of two assembly initiator proteins, it binds directly to the 5'-end of the 23S rRNA, where it nucleates assembly of the 50S subunit. Its function is as follows. One of the proteins that surrounds the polypeptide exit tunnel on the outside of the subunit. The chain is Large ribosomal subunit protein uL24 from Rhodopseudomonas palustris (strain ATCC BAA-98 / CGA009).